The chain runs to 274 residues: Actin-binding protein Smlt3054 (274 aa).

ANK repeat units lie at residues serine 192 to alanine 221 and histidine 225 to glutamine 254. Positions asparagine 251–leucine 274 are disordered.

As to quaternary structure, exists as a dimer as well as a higher order oligomer.

The protein resides in the secreted. It localises to the periplasm. Functionally, directly binds F-actin, which results in thickened and distorted F-actin fibers, and affects cellular F-actin localization. Thus, may be a host effector whose function is to disrupt host actin cytoskeletal structure, which may enhance invasion. In Stenotrophomonas maltophilia (strain K279a), this protein is Actin-binding protein Smlt3054.